The chain runs to 477 residues: Sensor protein kinase PmrB (477 aa).

Helical transmembrane passes span 13 to 33 and 161 to 181; these read LLVN…ALTY and LLLF…GGLV. The HAMP domain maps to 186–238; that stretch reads ARGLAPLREVQAEVQQRSARHLQPIAVEAVPLEIRGLIDELNLLLERLRTALE. A Histidine kinase domain is found at 246 to 459; that stretch reads DAAHEIRTPL…EVQVFLPKTQ (214 aa). Histidine 249 carries the phosphohistidine; by autocatalysis modification. The tract at residues 455-477 is disordered; sequence LPKTQPDATRPPARGPDSGRSHI.

It is found in the membrane. It carries out the reaction ATP + protein L-histidine = ADP + protein N-phospho-L-histidine.. Its function is as follows. Member of the two-component regulatory system PmrA/PmrB that plays a role in the regulation of resistance towards polymyxin B and cationic antimicrobial peptides in response to limiting concentrations of Mg(2+). Also autoregulates its own pmrAB operon under Mg(2+)-limiting conditions. May function as a membrane-associated protein kinase that phosphorylates PmrA in response to environmental signals leading to activation of specific gene promoters. The sequence is that of Sensor protein kinase PmrB (pmrB) from Pseudomonas aeruginosa (strain ATCC 15692 / DSM 22644 / CIP 104116 / JCM 14847 / LMG 12228 / 1C / PRS 101 / PAO1).